The following is a 719-amino-acid chain: Photosystem I P700 chlorophyll a apoprotein A1 (719 aa).

Helical transmembrane passes span 59-82 (VFSA…FHGA), 145-168 (LYCT…FHYH), 184-208 (LNHH…HVSL), 280-298 (TAHH…GHMY), 335-358 (WHAQ…HHMY), 374-400 (LSLF…IFMV), 422-444 (AIVS…LYIH), and 520-538 (FLVH…LILL). [4Fe-4S] cluster-binding residues include C562 and C571. Helical transmembrane passes span 578–599 (HVFL…HFSW) and 653–675 (LSAY…MFLF). H664 is a chlorophyll a' binding site. Residues M672 and Y680 each contribute to the chlorophyll a site. W681 provides a ligand contact to phylloquinone. Residues 713 to 719 (AVGVAHY) traverse the membrane as a helical segment.

The protein belongs to the PsaA/PsaB family. As to quaternary structure, the PsaA/B heterodimer binds the P700 chlorophyll special pair and subsequent electron acceptors. PSI consists of a core antenna complex that captures photons, and an electron transfer chain that converts photonic excitation into a charge separation. The eukaryotic PSI reaction center is composed of at least 11 subunits. Requires P700 is a chlorophyll a/chlorophyll a' dimer, A0 is one or more chlorophyll a, A1 is one or both phylloquinones and FX is a shared 4Fe-4S iron-sulfur center. as cofactor.

The protein localises to the plastid. It is found in the chloroplast thylakoid membrane. The catalysed reaction is reduced [plastocyanin] + hnu + oxidized [2Fe-2S]-[ferredoxin] = oxidized [plastocyanin] + reduced [2Fe-2S]-[ferredoxin]. Its function is as follows. PsaA and PsaB bind P700, the primary electron donor of photosystem I (PSI), as well as the electron acceptors A0, A1 and FX. PSI is a plastocyanin-ferredoxin oxidoreductase, converting photonic excitation into a charge separation, which transfers an electron from the donor P700 chlorophyll pair to the spectroscopically characterized acceptors A0, A1, FX, FA and FB in turn. Oxidized P700 is reduced on the lumenal side of the thylakoid membrane by plastocyanin. In Encephalartos lebomboensis (Lebombo cycad), this protein is Photosystem I P700 chlorophyll a apoprotein A1.